Here is a 151-residue protein sequence, read N- to C-terminus: Large ribosomal subunit protein uL15 (151 aa).

The segment at 1–57 (MTLRLDSLKSNKGARRRKLRKGRGIAAGQGASCGFGMRGQKSRSGRPTRPGFEGGQM) is disordered. Basic residues predominate over residues 12 to 23 (KGARRRKLRKGR). Positions 25–37 (IAAGQGASCGFGM) are enriched in gly residues.

It belongs to the universal ribosomal protein uL15 family. Part of the 50S ribosomal subunit.

Binds to the 23S rRNA. This is Large ribosomal subunit protein uL15 from Synechococcus sp. (strain CC9605).